We begin with the raw amino-acid sequence, 391 residues long: Ribonucleoside-diphosphate reductase small chain (391 aa).

Fe cation is bound by residues Asp-135, Glu-166, and His-169. Tyr-173 is a catalytic residue. Fe cation-binding residues include Glu-229, Glu-263, and His-266.

This sequence belongs to the ribonucleoside diphosphate reductase small chain family. As to quaternary structure, heterodimer of a large and a small subunit. Fe cation serves as cofactor.

It localises to the nucleus. The protein resides in the cytoplasm. It carries out the reaction a 2'-deoxyribonucleoside 5'-diphosphate + [thioredoxin]-disulfide + H2O = a ribonucleoside 5'-diphosphate + [thioredoxin]-dithiol. In terms of biological role, provides the precursors necessary for DNA synthesis. Catalyzes the biosynthesis of deoxyribonucleotides from the corresponding ribonucleotides. The protein is Ribonucleoside-diphosphate reductase small chain (suc22) of Schizosaccharomyces pombe (strain 972 / ATCC 24843) (Fission yeast).